The sequence spans 843 residues: Pentatricopeptide repeat-containing protein At4g21880, mitochondrial (843 aa).

PPR repeat units lie at residues 392–426 (SSTS…GLVI), 427–461 (SANI…SVKP), 462–496 (NSET…NLAP), 497–531 (NSSM…DVKP), 532–562 (DSVT…AGVE), 564–594 (NKHV…LEVP), and 598–632 (HNEL…RCPV).

Belongs to the PPR family. P subfamily.

It is found in the mitochondrion. The protein is Pentatricopeptide repeat-containing protein At4g21880, mitochondrial of Arabidopsis thaliana (Mouse-ear cress).